A 723-amino-acid polypeptide reads, in one-letter code: Peroxisomal bifunctional enzyme (723 aa).

The segment at Met1 to Ser282 is enoyl-CoA hydratase / isomerase. Lys38 carries the post-translational modification N6-succinyllysine. Gly101 is a substrate binding site. N6-acetyllysine; alternate is present on Lys165. N6-succinyllysine; alternate is present on Lys165. The residue at position 171 (Lys171) is an N6-acetyllysine. Lys219 bears the N6-acetyllysine; alternate mark. Lys219 carries the N6-succinyllysine; alternate modification. At Lys250 the chain carries N6-acetyllysine. N6-succinyllysine occurs at positions 280 and 290. The 3-hydroxyacyl-CoA dehydrogenase stretch occupies residues Thr283–Gly572. N6-acetyllysine occurs at positions 346, 350, and 464. Lys532 is modified (N6-succinyllysine). Thr548 is modified (phosphothreonine). Residue Lys577 is modified to N6-succinyllysine. N6-acetyllysine; alternate occurs at positions 584, 591, and 710. N6-succinyllysine; alternate occurs at positions 584, 591, and 710. Phosphoserine is present on Ser718. The Microbody targeting signal signature appears at Ser721–Leu723. Lys722 bears the N6-succinyllysine mark.

It in the N-terminal section; belongs to the enoyl-CoA hydratase/isomerase family. In the C-terminal section; belongs to the 3-hydroxyacyl-CoA dehydrogenase family. As to quaternary structure, monomer. In terms of processing, acetylated, leading to enhanced enzyme activity. Acetylation is enhanced by up to 80% after treatment either with trichostin A (TSA) or with nicotinamide (NAM) with highest increase on Lys-346. Acetylation and enzyme activity increased by about 1.5% on addition of fatty acids. In terms of tissue distribution, liver and kidney. Strongly expressed in the terminal segments of the proximal tubule. Lower amounts seen in the brain.

It is found in the peroxisome. It carries out the reaction a (3S)-3-hydroxyacyl-CoA = a (2E)-enoyl-CoA + H2O. The catalysed reaction is a 4-saturated-(3S)-3-hydroxyacyl-CoA = a (3E)-enoyl-CoA + H2O. It catalyses the reaction a (3Z)-enoyl-CoA = a 4-saturated (2E)-enoyl-CoA. The enzyme catalyses a (3E)-enoyl-CoA = a 4-saturated (2E)-enoyl-CoA. It carries out the reaction a (3S)-3-hydroxyacyl-CoA + NAD(+) = a 3-oxoacyl-CoA + NADH + H(+). The catalysed reaction is (2S,3S)-3-hydroxy-2-methylbutanoyl-CoA = (2E)-2-methylbut-2-enoyl-CoA + H2O. It catalyses the reaction (3S)-hydroxyhexadecanoyl-CoA + NAD(+) = 3-oxohexadecanoyl-CoA + NADH + H(+). The enzyme catalyses (3S)-hydroxyhexadecanoyl-CoA = (2E)-hexadecenoyl-CoA + H2O. It carries out the reaction (2E)-hexadecenedioyl-CoA + H2O = (3S)-hydroxyhexadecanedioyl-CoA. The catalysed reaction is (3S)-hydroxyhexadecanedioyl-CoA + NAD(+) = 3-oxohexadecanedioyl-CoA + NADH + H(+). It catalyses the reaction (3E,5Z)-tetradecadienoyl-CoA = (2E,5Z)-tetradecadienoyl-CoA. The enzyme catalyses (3E,5Z)-octadienoyl-CoA = (2E,5Z)-octadienoyl-CoA. It carries out the reaction (3S)-hydroxydecanoyl-CoA + NAD(+) = 3-oxodecanoyl-CoA + NADH + H(+). The catalysed reaction is (3E)-decenoyl-CoA = (2E)-decenoyl-CoA. It catalyses the reaction (3Z)-hexenoyl-CoA = (2E)-hexenoyl-CoA. The enzyme catalyses (3E)-hexenoyl-CoA = (2E)-hexenoyl-CoA. It carries out the reaction (3S)-hydroxydecanoyl-CoA = (2E)-decenoyl-CoA + H2O. The catalysed reaction is (3S)-hydroxyhexanoyl-CoA = (2E)-hexenoyl-CoA + H2O. It functions in the pathway lipid metabolism; fatty acid beta-oxidation. Enzyme activity enhanced by acetylation. Peroxisomal trifunctional enzyme possessing 2-enoyl-CoA hydratase, 3-hydroxyacyl-CoA dehydrogenase, and delta 3, delta 2-enoyl-CoA isomerase activities. Catalyzes two of the four reactions of the long chain fatty acids peroxisomal beta-oxidation pathway. Can also use branched-chain fatty acids such as 2-methyl-2E-butenoyl-CoA as a substrate, which is hydrated into (2S,3S)-3-hydroxy-2-methylbutanoyl-CoA. Optimal isomerase for 2,5 double bonds into 3,5 form isomerization in a range of enoyl-CoA species. Also able to isomerize both 3-cis and 3-trans double bonds into the 2-trans form in a range of enoyl-CoA species. With HSD17B4, catalyzes the hydration of trans-2-enoyl-CoA and the dehydrogenation of 3-hydroxyacyl-CoA, but with opposite chiral specificity. Regulates the amount of medium-chain dicarboxylic fatty acids which are essential regulators of all fatty acid oxidation pathways. Also involved in the degradation of long-chain dicarboxylic acids through peroxisomal beta-oxidation. The sequence is that of Peroxisomal bifunctional enzyme from Homo sapiens (Human).